The sequence spans 133 residues: Holo-[acyl-carrier-protein] synthase (133 aa).

2 residues coordinate Mg(2+): Asp8 and Glu57.

It belongs to the P-Pant transferase superfamily. AcpS family. Mg(2+) is required as a cofactor.

It is found in the cytoplasm. It carries out the reaction apo-[ACP] + CoA = holo-[ACP] + adenosine 3',5'-bisphosphate + H(+). Transfers the 4'-phosphopantetheine moiety from coenzyme A to a Ser of acyl-carrier-protein. The chain is Holo-[acyl-carrier-protein] synthase from Bartonella henselae (strain ATCC 49882 / DSM 28221 / CCUG 30454 / Houston 1) (Rochalimaea henselae).